The primary structure comprises 1502 residues: Leucine-rich repeat-containing protein 9 (1502 aa).

LRR repeat units follow at residues 53–79 (FPNL…HFLK), 97–119 (CADL…LENL), 120–141 (LKLE…LDMM), 142–164 (QNLK…LDPN), 166–188 (QLER…NLAR), 224–247 (LQRL…TVVK), 296–320 (EHEL…KFHE), 699–721 (YSQI…ISRL), 722–744 (NGLR…SYLT), 746–764 (LEYL…GFKG), 765–790 (LGKL…ILRK), 792–814 (AIQL…VLKD), 822–849 (LTHL…RITQ), 894–916 (YTKI…LEKL), 917–938 (VNLR…LEHC), 939–960 (VNLE…LSKL), 961–983 (TKLR…VIES), 985–1009 (SHLH…GYKL), 1011–1030 (ELYL…SLKG), 1031–1053 (LNNL…NYRL), 1100–1123 (FTEL…PADH), 1124–1146 (FRNV…LIFL), 1147–1170 (PNIK…KSQS), 1209–1232 (MQSL…QLGR), 1234–1255 (RNLK…LENL), 1256–1278 (QFLR…SFAK), 1280–1301 (NSLV…LPPL), 1302–1325 (LKLR…KLEV), and 1327–1351 (PALV…LLVV). Residues 317-342 (KFHENNCDTEESNSQQSSERRKNNSD) are disordered. Residues 1479 to 1496 (TQQSGQARSQQKHPFNQE) are compositionally biased toward polar residues. The segment at 1479 to 1502 (TQQSGQARSQQKHPFNQENEGRCV) is disordered.

The polypeptide is Leucine-rich repeat-containing protein 9 (lrrc9) (Xenopus tropicalis (Western clawed frog)).